The following is a 685-amino-acid chain: Polyphosphate kinase (685 aa).

Asn45 lines the ATP pocket. Mg(2+) contacts are provided by Arg372 and Arg402. One can recognise a PLD phosphodiesterase 1 domain in the interval Pro427–Thr461. Residue His432 is the Phosphohistidine intermediate of the active site. ATP is bound by residues Tyr465, Arg561, and His589. One can recognise a PLD phosphodiesterase 2 domain in the interval Asp584 to Asn614.

The protein belongs to the polyphosphate kinase 1 (PPK1) family. It depends on Mg(2+) as a cofactor. An intermediate of this reaction is the autophosphorylated ppk in which a phosphate is covalently linked to a histidine residue through a N-P bond.

It catalyses the reaction [phosphate](n) + ATP = [phosphate](n+1) + ADP. Functionally, catalyzes the reversible transfer of the terminal phosphate of ATP to form a long-chain polyphosphate (polyP). The chain is Polyphosphate kinase from Klebsiella pneumoniae.